The primary structure comprises 95 residues: Aspartyl/glutamyl-tRNA(Asn/Gln) amidotransferase subunit C (95 aa).

Belongs to the GatC family. In terms of assembly, heterotrimer of A, B and C subunits.

It catalyses the reaction L-glutamyl-tRNA(Gln) + L-glutamine + ATP + H2O = L-glutaminyl-tRNA(Gln) + L-glutamate + ADP + phosphate + H(+). The enzyme catalyses L-aspartyl-tRNA(Asn) + L-glutamine + ATP + H2O = L-asparaginyl-tRNA(Asn) + L-glutamate + ADP + phosphate + 2 H(+). Allows the formation of correctly charged Asn-tRNA(Asn) or Gln-tRNA(Gln) through the transamidation of misacylated Asp-tRNA(Asn) or Glu-tRNA(Gln) in organisms which lack either or both of asparaginyl-tRNA or glutaminyl-tRNA synthetases. The reaction takes place in the presence of glutamine and ATP through an activated phospho-Asp-tRNA(Asn) or phospho-Glu-tRNA(Gln). This is Aspartyl/glutamyl-tRNA(Asn/Gln) amidotransferase subunit C from Citrifermentans bemidjiense (strain ATCC BAA-1014 / DSM 16622 / JCM 12645 / Bem) (Geobacter bemidjiensis).